The primary structure comprises 379 residues: Dual-specificity RNA methyltransferase RlmN (379 aa).

Residue E97 is the Proton acceptor of the active site. The region spanning 103-343 (QGGRGTLCVS…VRTTRGDDID (241 aa)) is the Radical SAM core domain. A disulfide bridge links C110 with C346. Positions 117, 121, and 124 each coordinate [4Fe-4S] cluster. Residues 171-172 (GE), S203, 225-227 (SLH), and N303 each bind S-adenosyl-L-methionine. C346 functions as the S-methylcysteine intermediate in the catalytic mechanism.

It belongs to the radical SAM superfamily. RlmN family. Requires [4Fe-4S] cluster as cofactor.

The protein localises to the cytoplasm. It catalyses the reaction adenosine(2503) in 23S rRNA + 2 reduced [2Fe-2S]-[ferredoxin] + 2 S-adenosyl-L-methionine = 2-methyladenosine(2503) in 23S rRNA + 5'-deoxyadenosine + L-methionine + 2 oxidized [2Fe-2S]-[ferredoxin] + S-adenosyl-L-homocysteine. The enzyme catalyses adenosine(37) in tRNA + 2 reduced [2Fe-2S]-[ferredoxin] + 2 S-adenosyl-L-methionine = 2-methyladenosine(37) in tRNA + 5'-deoxyadenosine + L-methionine + 2 oxidized [2Fe-2S]-[ferredoxin] + S-adenosyl-L-homocysteine. Functionally, specifically methylates position 2 of adenine 2503 in 23S rRNA and position 2 of adenine 37 in tRNAs. m2A2503 modification seems to play a crucial role in the proofreading step occurring at the peptidyl transferase center and thus would serve to optimize ribosomal fidelity. The chain is Dual-specificity RNA methyltransferase RlmN from Pseudomonas aeruginosa (strain ATCC 15692 / DSM 22644 / CIP 104116 / JCM 14847 / LMG 12228 / 1C / PRS 101 / PAO1).